A 136-amino-acid chain; its full sequence is Small ribosomal subunit protein eS17B (136 aa).

Belongs to the eukaryotic ribosomal protein eS17 family. As to quaternary structure, component of the small ribosomal subunit (SSU). Mature yeast ribosomes consist of a small (40S) and a large (60S) subunit. The 40S small subunit contains 1 molecule of ribosomal RNA (18S rRNA) and 33 different proteins (encoded by 57 genes). The large 60S subunit contains 3 rRNA molecules (25S, 5.8S and 5S rRNA) and 46 different proteins (encoded by 81 genes).

The protein localises to the cytoplasm. Functionally, component of the ribosome, a large ribonucleoprotein complex responsible for the synthesis of proteins in the cell. The small ribosomal subunit (SSU) binds messenger RNAs (mRNAs) and translates the encoded message by selecting cognate aminoacyl-transfer RNA (tRNA) molecules. The large subunit (LSU) contains the ribosomal catalytic site termed the peptidyl transferase center (PTC), which catalyzes the formation of peptide bonds, thereby polymerizing the amino acids delivered by tRNAs into a polypeptide chain. The nascent polypeptides leave the ribosome through a tunnel in the LSU and interact with protein factors that function in enzymatic processing, targeting, and the membrane insertion of nascent chains at the exit of the ribosomal tunnel. This is Small ribosomal subunit protein eS17B from Saccharomyces cerevisiae (strain ATCC 204508 / S288c) (Baker's yeast).